The sequence spans 974 residues: UvrABC system protein A (974 aa).

34–41 (GLSGSGKS) contacts ATP. ABC transporter domains lie at 331-610 (WARS…TNSL) and 630-959 (ISKT…QFLK). 663 to 670 (GVSGGGKS) lines the ATP pocket. The C4-type zinc finger occupies 762–788 (CEACQGDGVIKIEMHFLPDVYVTCDVC).

Belongs to the ABC transporter superfamily. UvrA family. In terms of assembly, forms a heterotetramer with UvrB during the search for lesions.

It is found in the cytoplasm. In terms of biological role, the UvrABC repair system catalyzes the recognition and processing of DNA lesions. UvrA is an ATPase and a DNA-binding protein. A damage recognition complex composed of 2 UvrA and 2 UvrB subunits scans DNA for abnormalities. When the presence of a lesion has been verified by UvrB, the UvrA molecules dissociate. This chain is UvrABC system protein A, found in Brucella abortus (strain 2308).